The primary structure comprises 162 residues: 2-C-methyl-D-erythritol 2,4-cyclodiphosphate synthase (162 aa).

Asp9 and His11 together coordinate a divalent metal cation. 4-CDP-2-C-methyl-D-erythritol 2-phosphate-binding positions include 9 to 11 (DVH) and 35 to 36 (HS). His43 contacts a divalent metal cation. Residues 57 to 59 (DIG), 62 to 66 (FPDTD), 133 to 136 (TTTE), Phe140, and Arg143 contribute to the 4-CDP-2-C-methyl-D-erythritol 2-phosphate site.

It belongs to the IspF family. Homotrimer. The cofactor is a divalent metal cation.

The catalysed reaction is 4-CDP-2-C-methyl-D-erythritol 2-phosphate = 2-C-methyl-D-erythritol 2,4-cyclic diphosphate + CMP. Its pathway is isoprenoid biosynthesis; isopentenyl diphosphate biosynthesis via DXP pathway; isopentenyl diphosphate from 1-deoxy-D-xylulose 5-phosphate: step 4/6. Functionally, involved in the biosynthesis of isopentenyl diphosphate (IPP) and dimethylallyl diphosphate (DMAPP), two major building blocks of isoprenoid compounds. Catalyzes the conversion of 4-diphosphocytidyl-2-C-methyl-D-erythritol 2-phosphate (CDP-ME2P) to 2-C-methyl-D-erythritol 2,4-cyclodiphosphate (ME-CPP) with a corresponding release of cytidine 5-monophosphate (CMP). The sequence is that of 2-C-methyl-D-erythritol 2,4-cyclodiphosphate synthase from Histophilus somni (strain 2336) (Haemophilus somnus).